The primary structure comprises 279 residues: Toxin TxP-I (279 aa).

The N-terminal stretch at 1 to 14 (MNLFFLFIIPTILA) is a signal peptide. The propeptide occupies 15–27 (VKPFRSFNNISLI).

Contains several disulfide bonds. As to expression, posterior glands which appear to be connected with the stylet through a series of ducts.

It is found in the secreted. Its function is as follows. Part of a complex mixture of neurotoxins which P.tritici utilizes to capture prey. It has contracting-paralyzing activity in insects. This chain is Toxin TxP-I, found in Pyemotes tritici (Straw itch mite).